A 211-amino-acid chain; its full sequence is Protein GrpE (211 aa).

Residues 1–10 (MTDDTKKPGP) show a composition bias toward basic and acidic residues. 2 disordered regions span residues 1–37 (MTDDTKKPGPDADVAEEFVDPAQAGEEQAETAEPDPV) and 187–211 (AKGGPKAEPSASAEPGTSSLNEKDA). A compositionally biased stretch (acidic residues) spans 27–36 (EQAETAEPDP). The span at 201-211 (PGTSSLNEKDA) shows a compositional bias: polar residues.

Belongs to the GrpE family. Homodimer.

It is found in the cytoplasm. Functionally, participates actively in the response to hyperosmotic and heat shock by preventing the aggregation of stress-denatured proteins, in association with DnaK and GrpE. It is the nucleotide exchange factor for DnaK and may function as a thermosensor. Unfolded proteins bind initially to DnaJ; upon interaction with the DnaJ-bound protein, DnaK hydrolyzes its bound ATP, resulting in the formation of a stable complex. GrpE releases ADP from DnaK; ATP binding to DnaK triggers the release of the substrate protein, thus completing the reaction cycle. Several rounds of ATP-dependent interactions between DnaJ, DnaK and GrpE are required for fully efficient folding. The chain is Protein GrpE from Agrobacterium fabrum (strain C58 / ATCC 33970) (Agrobacterium tumefaciens (strain C58)).